Reading from the N-terminus, the 143-residue chain is Peptide methionine sulfoxide reductase MsrB (143 aa).

The 123-residue stretch at 5-127 (KEKRLKELNR…NSAALKFIPK (123 aa)) folds into the MsrB domain. The Nucleophile role is filled by Cys116.

This sequence belongs to the MsrB Met sulfoxide reductase family.

It catalyses the reaction L-methionyl-[protein] + [thioredoxin]-disulfide + H2O = L-methionyl-(R)-S-oxide-[protein] + [thioredoxin]-dithiol. The sequence is that of Peptide methionine sulfoxide reductase MsrB from Bacillus pumilus (strain SAFR-032).